The following is a 550-amino-acid chain: Arginine--tRNA ligase (550 aa).

The 'HIGH' region signature appears at 130 to 140 (ANPTGPIHLGG).

The protein belongs to the class-I aminoacyl-tRNA synthetase family. In terms of assembly, monomer.

The protein resides in the cytoplasm. It carries out the reaction tRNA(Arg) + L-arginine + ATP = L-arginyl-tRNA(Arg) + AMP + diphosphate. The chain is Arginine--tRNA ligase (argS) from Corynebacterium glutamicum (strain ATCC 13032 / DSM 20300 / JCM 1318 / BCRC 11384 / CCUG 27702 / LMG 3730 / NBRC 12168 / NCIMB 10025 / NRRL B-2784 / 534).